We begin with the raw amino-acid sequence, 335 residues long: Probable nicotianamine synthase 3 (335 aa).

It belongs to the nicotianamine synthase (NAS)-like family.

It catalyses the reaction 3 S-adenosyl-L-methionine = nicotianamine + 3 S-methyl-5'-thioadenosine + 3 H(+). Its function is as follows. Synthesizes nicotianamine, a polyamine that is the first intermediate in the synthesis of the phytosiderophores of the mugineic acid type found in gramineae which serves as a sensor for the physiological iron status within the plant, and/or might be involved in the transport of iron. The protein is Probable nicotianamine synthase 3 (NAS3) of Hordeum vulgare (Barley).